A 179-amino-acid chain; its full sequence is MVQAWYMDDAPGDPRQPHRPDPGRPVGLEQLRRLGVLYWKLDADKYENDPELEKIRRERNYSWMDIITICKDKLPNYEEKIKMFYEEHLHLDDEIRYILDGSGYFDVRDKEDQWIRIFMEKGDMVTLPAGIYHRFTVDEKNYTKAMRLFVGEPVWTAYNRPADHFEARGQYVKFLAQTA.

A disordered region spans residues 7 to 26 (MDDAPGDPRQPHRPDPGRPV). Residues H88, H90, E94, and H133 each coordinate Fe(2+). 4 residues coordinate Ni(2+): H88, H90, E94, and H133.

This sequence belongs to the acireductone dioxygenase (ARD) family. As to quaternary structure, monomer. Interacts with MMP14. Fe(2+) is required as a cofactor. Ni(2+) serves as cofactor. Detected in heart, colon, lung, stomach, brain, spleen, liver, skeletal muscle and kidney.

It localises to the cytoplasm. Its subcellular location is the nucleus. The protein resides in the cell membrane. It catalyses the reaction 1,2-dihydroxy-5-(methylsulfanyl)pent-1-en-3-one + O2 = 4-methylsulfanyl-2-oxobutanoate + formate + 2 H(+). The enzyme catalyses 1,2-dihydroxy-5-(methylsulfanyl)pent-1-en-3-one + O2 = 3-(methylsulfanyl)propanoate + CO + formate + 2 H(+). The protein operates within amino-acid biosynthesis; L-methionine biosynthesis via salvage pathway; L-methionine from S-methyl-5-thio-alpha-D-ribose 1-phosphate: step 5/6. In terms of biological role, catalyzes 2 different reactions between oxygen and the acireductone 1,2-dihydroxy-3-keto-5-methylthiopentene (DHK-MTPene) depending upon the metal bound in the active site. Fe-containing acireductone dioxygenase (Fe-ARD) produces formate and 2-keto-4-methylthiobutyrate (KMTB), the alpha-ketoacid precursor of methionine in the methionine recycle pathway. Ni-containing acireductone dioxygenase (Ni-ARD) produces methylthiopropionate, carbon monoxide and formate, and does not lie on the methionine recycle pathway. Also down-regulates cell migration mediated by MMP14. Necessary for hepatitis C virus replication in an otherwise non-permissive cell line. This chain is Acireductone dioxygenase, found in Homo sapiens (Human).